The sequence spans 154 residues: Histone H2B.5 (154 aa).

Positions 1-25 are enriched in basic and acidic residues; the sequence is MAPKAEKKPAAKKVAEEEPSEKAAP. The disordered stretch occupies residues 1–62; the sequence is MAPKAEKKPA…DKKGRKKAKK (62 aa). 2 positions are modified to N6-acetyllysine: Lys7 and Lys39. A Glycyl lysine isopeptide (Lys-Gly) (interchain with G-Cter in ubiquitin) cross-link involves residue Lys150.

Belongs to the histone H2B family. In terms of assembly, the nucleosome is a histone octamer containing two molecules each of H2A, H2B, H3 and H4 assembled in one H3-H4 heterotetramer and two H2A-H2B heterodimers. The octamer wraps approximately 147 bp of DNA. Post-translationally, can be acetylated to form H2BK6ac and H2BK33ac. In terms of processing, monoubiquitinated to form H2BK143ub1; may give a specific tag for epigenetic transcriptional activation.

The protein localises to the nucleus. It localises to the chromosome. Core component of nucleosome. Nucleosomes wrap and compact DNA into chromatin, limiting DNA accessibility to the cellular machineries which require DNA as a template. Histones thereby play a central role in transcription regulation, DNA repair, DNA replication and chromosomal stability. DNA accessibility is regulated via a complex set of post-translational modifications of histones, also called histone code, and nucleosome remodeling. The sequence is that of Histone H2B.5 from Zea mays (Maize).